We begin with the raw amino-acid sequence, 238 residues long: Histone H1 (238 aa).

Low complexity-rich tracts occupy residues 21–34 and 123–132; these read AAVD…AKAP and AKAPAAVKPK. Disordered regions lie at residues 21–57 and 123–238; these read AAVD…AHPS and AKAP…KAKK. One can recognise an H15 domain in the interval 54-124; it reads AHPSYAEMVS…KVKGSYKLAK (71 aa). A compositionally biased stretch (basic residues) spans 133-197; sequence TATKKKPAAK…AAKPKAKAAA (65 aa). 2 stretches are compositionally biased toward low complexity: residues 198 to 208 and 217 to 230; these read KKAPAAATPKK and KRAT…PAKK.

Belongs to the histone H1/H5 family.

It localises to the nucleus. The protein resides in the chromosome. Its function is as follows. Histones H1 are necessary for the condensation of nucleosome chains into higher-order structures. This is Histone H1 from Triticum aestivum (Wheat).